Here is a 132-residue protein sequence, read N- to C-terminus: Small ribosomal subunit protein uS8 (132 aa).

This sequence belongs to the universal ribosomal protein uS8 family. As to quaternary structure, part of the 30S ribosomal subunit. Contacts proteins S5 and S12.

Functionally, one of the primary rRNA binding proteins, it binds directly to 16S rRNA central domain where it helps coordinate assembly of the platform of the 30S subunit. This is Small ribosomal subunit protein uS8 from Mesorhizobium japonicum (strain LMG 29417 / CECT 9101 / MAFF 303099) (Mesorhizobium loti (strain MAFF 303099)).